The sequence spans 304 residues: Glutaminase (304 aa).

Substrate is bound by residues serine 63, asparagine 114, glutamate 158, asparagine 165, tyrosine 189, tyrosine 240, and valine 258.

Belongs to the glutaminase family. In terms of assembly, homotetramer.

It catalyses the reaction L-glutamine + H2O = L-glutamate + NH4(+). The sequence is that of Glutaminase from Shewanella loihica (strain ATCC BAA-1088 / PV-4).